We begin with the raw amino-acid sequence, 306 residues long: Glutaminase (306 aa).

Substrate contacts are provided by Ser-64, Asn-115, Glu-159, Asn-166, Tyr-190, Tyr-242, and Val-260.

Belongs to the glutaminase family. As to quaternary structure, homotetramer.

The catalysed reaction is L-glutamine + H2O = L-glutamate + NH4(+). The protein is Glutaminase of Vibrio cholerae serotype O1 (strain ATCC 39315 / El Tor Inaba N16961).